We begin with the raw amino-acid sequence, 177 residues long: Bifunctional protein PyrR (177 aa).

The PRPP-binding signature appears at 99 to 111 (VVLVDDVLFTGRT).

It belongs to the purine/pyrimidine phosphoribosyltransferase family. PyrR subfamily.

The enzyme catalyses UMP + diphosphate = 5-phospho-alpha-D-ribose 1-diphosphate + uracil. Its function is as follows. Regulates the transcription of the pyrimidine nucleotide (pyr) operon in response to exogenous pyrimidines. In terms of biological role, also displays a weak uracil phosphoribosyltransferase activity which is not physiologically significant. This Citrifermentans bemidjiense (strain ATCC BAA-1014 / DSM 16622 / JCM 12645 / Bem) (Geobacter bemidjiensis) protein is Bifunctional protein PyrR.